The following is a 223-amino-acid chain: Phosphoribosylformylglycinamidine synthase subunit PurQ (223 aa).

The Glutamine amidotransferase type-1 domain occupies 3-223 (FAVLVFPGSN…MVKSWREQHV (221 aa)). Catalysis depends on C85, which acts as the Nucleophile. Residues H193 and E195 contribute to the active site.

As to quaternary structure, part of the FGAM synthase complex composed of 1 PurL, 1 PurQ and 2 PurS subunits.

It localises to the cytoplasm. The enzyme catalyses N(2)-formyl-N(1)-(5-phospho-beta-D-ribosyl)glycinamide + L-glutamine + ATP + H2O = 2-formamido-N(1)-(5-O-phospho-beta-D-ribosyl)acetamidine + L-glutamate + ADP + phosphate + H(+). It catalyses the reaction L-glutamine + H2O = L-glutamate + NH4(+). The protein operates within purine metabolism; IMP biosynthesis via de novo pathway; 5-amino-1-(5-phospho-D-ribosyl)imidazole from N(2)-formyl-N(1)-(5-phospho-D-ribosyl)glycinamide: step 1/2. Functionally, part of the phosphoribosylformylglycinamidine synthase complex involved in the purines biosynthetic pathway. Catalyzes the ATP-dependent conversion of formylglycinamide ribonucleotide (FGAR) and glutamine to yield formylglycinamidine ribonucleotide (FGAM) and glutamate. The FGAM synthase complex is composed of three subunits. PurQ produces an ammonia molecule by converting glutamine to glutamate. PurL transfers the ammonia molecule to FGAR to form FGAM in an ATP-dependent manner. PurS interacts with PurQ and PurL and is thought to assist in the transfer of the ammonia molecule from PurQ to PurL. The protein is Phosphoribosylformylglycinamidine synthase subunit PurQ of Staphylococcus aureus (strain MRSA252).